The chain runs to 384 residues: Succinate--CoA ligase [ADP-forming] subunit beta (384 aa).

The region spanning 9-242 (KAILAQYKVP…LNEEDPLEVE (234 aa)) is the ATP-grasp domain. Residues Lys45, 52–54 (GRG), Glu98, Leu101, and Glu106 each bind ATP. Mg(2+)-binding residues include Asn197 and Asp211. Residues Asn262 and 319-321 (GIL) each bind substrate.

It belongs to the succinate/malate CoA ligase beta subunit family. Heterotetramer of two alpha and two beta subunits. The cofactor is Mg(2+).

It catalyses the reaction succinate + ATP + CoA = succinyl-CoA + ADP + phosphate. It carries out the reaction GTP + succinate + CoA = succinyl-CoA + GDP + phosphate. The protein operates within carbohydrate metabolism; tricarboxylic acid cycle; succinate from succinyl-CoA (ligase route): step 1/1. Succinyl-CoA synthetase functions in the citric acid cycle (TCA), coupling the hydrolysis of succinyl-CoA to the synthesis of either ATP or GTP and thus represents the only step of substrate-level phosphorylation in the TCA. The beta subunit provides nucleotide specificity of the enzyme and binds the substrate succinate, while the binding sites for coenzyme A and phosphate are found in the alpha subunit. The chain is Succinate--CoA ligase [ADP-forming] subunit beta from Solibacter usitatus (strain Ellin6076).